The sequence spans 250 residues: Flavin-dependent thymidylate synthase (250 aa).

Residues 7–233 (LRVQLIAKTE…PQVFSDFEIT (227 aa)) enclose the ThyX domain. Residues Ser-71, 95 to 97 (RHR), and Gln-103 each bind FAD. Residues 92–95 (ELIR), 103–107 (QLSQR), and Arg-172 each bind dUMP. The ThyX motif signature appears at 95–105 (RHRHFSYSQLS). FAD-binding positions include 188-190 (NYR) and His-194. Arg-199 lines the dUMP pocket. The active-site Involved in ionization of N3 of dUMP, leading to its activation is the Arg-199.

It belongs to the thymidylate synthase ThyX family. Homotetramer. FAD is required as a cofactor.

The enzyme catalyses dUMP + (6R)-5,10-methylene-5,6,7,8-tetrahydrofolate + NADPH + H(+) = dTMP + (6S)-5,6,7,8-tetrahydrofolate + NADP(+). It functions in the pathway pyrimidine metabolism; dTTP biosynthesis. Catalyzes the reductive methylation of 2'-deoxyuridine-5'-monophosphate (dUMP) to 2'-deoxythymidine-5'-monophosphate (dTMP) while utilizing 5,10-methylenetetrahydrofolate (mTHF) as the methyl donor, and NADPH and FADH(2) as the reductant. The protein is Flavin-dependent thymidylate synthase of Mycolicibacterium gilvum (strain PYR-GCK) (Mycobacterium gilvum (strain PYR-GCK)).